We begin with the raw amino-acid sequence, 341 residues long: Methionine import ATP-binding protein MetN 1 (341 aa).

Positions 2-241 (IKLNQIVKRY…PQHEVTKRFV (240 aa)) constitute an ABC transporter domain. 38–45 (GFSGAGKS) is an ATP binding site.

The protein belongs to the ABC transporter superfamily. Methionine importer (TC 3.A.1.24) family. As to quaternary structure, the complex is composed of two ATP-binding proteins (MetN), two transmembrane proteins (MetI) and a solute-binding protein (MetQ).

The protein localises to the cell membrane. The enzyme catalyses L-methionine(out) + ATP + H2O = L-methionine(in) + ADP + phosphate + H(+). It carries out the reaction D-methionine(out) + ATP + H2O = D-methionine(in) + ADP + phosphate + H(+). Part of the ABC transporter complex MetNIQ involved in methionine import. Responsible for energy coupling to the transport system. The chain is Methionine import ATP-binding protein MetN 1 from Staphylococcus epidermidis (strain ATCC 12228 / FDA PCI 1200).